A 347-amino-acid chain; its full sequence is Quinolinate synthase (347 aa).

Positions 47 and 68 each coordinate iminosuccinate. A [4Fe-4S] cluster-binding site is contributed by C113. Iminosuccinate is bound by residues 139 to 141 (YAN) and S156. C200 is a [4Fe-4S] cluster binding site. Iminosuccinate is bound by residues 226–228 (HPE) and T243. Residue C297 coordinates [4Fe-4S] cluster.

The protein belongs to the quinolinate synthase family. Type 1 subfamily. It depends on [4Fe-4S] cluster as a cofactor.

The protein localises to the cytoplasm. It carries out the reaction iminosuccinate + dihydroxyacetone phosphate = quinolinate + phosphate + 2 H2O + H(+). It functions in the pathway cofactor biosynthesis; NAD(+) biosynthesis; quinolinate from iminoaspartate: step 1/1. Functionally, catalyzes the condensation of iminoaspartate with dihydroxyacetone phosphate to form quinolinate. In Shigella flexneri serotype 5b (strain 8401), this protein is Quinolinate synthase.